The chain runs to 403 residues: tRNA pseudouridine synthase D (403 aa).

Over residues 1-10 (MTVQVQDHDI) the composition is skewed to basic and acidic residues. The interval 1–24 (MTVQVQDHDITTAADTAKLPQPMQ) is disordered. Catalysis depends on D92, which acts as the Nucleophile. The TRUD domain occupies 192-354 (GVPNYFGPQR…IKAQRRALRL (163 aa)). The interval 217 to 240 (ARPVPESRPQPNKGKRKRVPREQN) is disordered.

Belongs to the pseudouridine synthase TruD family.

The enzyme catalyses uridine(13) in tRNA = pseudouridine(13) in tRNA. In terms of biological role, responsible for synthesis of pseudouridine from uracil-13 in transfer RNAs. The polypeptide is tRNA pseudouridine synthase D (Psychrobacter arcticus (strain DSM 17307 / VKM B-2377 / 273-4)).